The primary structure comprises 99 residues: uncharacterized protein (99 aa).

This sequence belongs to the ycf15 family.

The protein resides in the plastid. It is found in the chloroplast. This is an uncharacterized protein from Saccharum hybrid (Sugarcane).